We begin with the raw amino-acid sequence, 334 residues long: MKFIDQAIIHVIAGNGGNGCVSFRREKYIPKGGPDGGNGGDGGNIWLEANNNLNTLIDLRFKKKFQAQNGQNGSSRKSSGKKGDDIKIHVPIGTKVINYQTREIIGDLIQHKQKMLIAKGGWHGLGNARFKSSTNRTPRQSTLGSIGEKRDIQLELMLLADVGTLGMPNVGKSTLVTNISGAKTKISDYPFTTLHPVLGSVNIQKNKKFIIADIPGIIKGASYGAGLGIRFLKHLERCKLLLHIIDLVPQNNCHPSDNIKTVLNELKKYSLKLYNKPRWFIFNKIDLLSVEELNQIIKEIIFQFKIHEKYYLISSMKKIGIKKLCSDITKYLKK.

An Obg domain is found at 1-159 (MKFIDQAIIH…RDIQLELMLL (159 aa)). Positions 67-86 (AQNGQNGSSRKSSGKKGDDI) are disordered. Residues 68–77 (QNGQNGSSRK) show a composition bias toward low complexity. The region spanning 160-333 (ADVGTLGMPN…LCSDITKYLK (174 aa)) is the OBG-type G domain. Residues 166 to 173 (GMPNVGKS), 191 to 195 (FTTLH), 213 to 216 (DIPG), 283 to 286 (NKID), and 314 to 316 (SSM) each bind GTP. Residues serine 173 and threonine 193 each contribute to the Mg(2+) site.

Belongs to the TRAFAC class OBG-HflX-like GTPase superfamily. OBG GTPase family. In terms of assembly, monomer. It depends on Mg(2+) as a cofactor.

It localises to the cytoplasm. An essential GTPase which binds GTP, GDP and possibly (p)ppGpp with moderate affinity, with high nucleotide exchange rates and a fairly low GTP hydrolysis rate. Plays a role in control of the cell cycle, stress response, ribosome biogenesis and in those bacteria that undergo differentiation, in morphogenesis control. In Buchnera aphidicola subsp. Acyrthosiphon pisum (strain 5A), this protein is GTPase Obg.